Reading from the N-terminus, the 383-residue chain is Probable endopolygalacturonase C (383 aa).

The signal sequence occupies residues 1–16 (MVRQLILISSLLAAVA). The propeptide occupies 17-40 (VRAPADPAHPMVTEAPDVNLVEKR). A disulfide bridge links Cys-44 with Cys-62. 2 PbH1 repeats span residues 175 to 206 (STDL…DIGE) and 207 to 228 (STYI…AINS). Asp-221 acts as the Proton donor in catalysis. Cys-223 and Cys-239 form a disulfide bridge. Residue His-243 is part of the active site. 2 PbH1 repeats span residues 253–279 (RDDN…RIKT) and 287–309 (VSEV…VIEQ). Asn-260 is a glycosylation site (N-linked (GlcNAc...) asparagine). Cystine bridges form between Cys-348-Cys-353 and Cys-372-Cys-381.

The protein belongs to the glycosyl hydrolase 28 family.

The protein resides in the secreted. The catalysed reaction is (1,4-alpha-D-galacturonosyl)n+m + H2O = (1,4-alpha-D-galacturonosyl)n + (1,4-alpha-D-galacturonosyl)m.. Involved in maceration and soft-rotting of plant tissue. Hydrolyzes the 1,4-alpha glycosidic bonds of de-esterified pectate in the smooth region of the plant cell wall. The polypeptide is Probable endopolygalacturonase C (pgaC) (Aspergillus niger).